We begin with the raw amino-acid sequence, 227 residues long: Phosphoribosylformylglycinamidine synthase subunit PurQ (227 aa).

The 223-residue stretch at 3–225 (FAVIVFPGSN…LKQWRETYVV (223 aa)) folds into the Glutamine amidotransferase type-1 domain. Cys-86 (nucleophile) is an active-site residue. Residues His-194 and Glu-196 contribute to the active site.

Part of the FGAM synthase complex composed of 1 PurL, 1 PurQ and 2 PurS subunits.

Its subcellular location is the cytoplasm. It carries out the reaction N(2)-formyl-N(1)-(5-phospho-beta-D-ribosyl)glycinamide + L-glutamine + ATP + H2O = 2-formamido-N(1)-(5-O-phospho-beta-D-ribosyl)acetamidine + L-glutamate + ADP + phosphate + H(+). The catalysed reaction is L-glutamine + H2O = L-glutamate + NH4(+). It functions in the pathway purine metabolism; IMP biosynthesis via de novo pathway; 5-amino-1-(5-phospho-D-ribosyl)imidazole from N(2)-formyl-N(1)-(5-phospho-D-ribosyl)glycinamide: step 1/2. Its function is as follows. Part of the phosphoribosylformylglycinamidine synthase complex involved in the purines biosynthetic pathway. Catalyzes the ATP-dependent conversion of formylglycinamide ribonucleotide (FGAR) and glutamine to yield formylglycinamidine ribonucleotide (FGAM) and glutamate. The FGAM synthase complex is composed of three subunits. PurQ produces an ammonia molecule by converting glutamine to glutamate. PurL transfers the ammonia molecule to FGAR to form FGAM in an ATP-dependent manner. PurS interacts with PurQ and PurL and is thought to assist in the transfer of the ammonia molecule from PurQ to PurL. This Bacillus thuringiensis (strain Al Hakam) protein is Phosphoribosylformylglycinamidine synthase subunit PurQ.